We begin with the raw amino-acid sequence, 430 residues long: Trigger factor (430 aa).

The PPIase FKBP-type domain occupies 163-248 (GNIAIIDFKG…IKDIKVKELP (86 aa)).

It belongs to the FKBP-type PPIase family. Tig subfamily.

It localises to the cytoplasm. It catalyses the reaction [protein]-peptidylproline (omega=180) = [protein]-peptidylproline (omega=0). Its function is as follows. Involved in protein export. Acts as a chaperone by maintaining the newly synthesized protein in an open conformation. Functions as a peptidyl-prolyl cis-trans isomerase. The protein is Trigger factor of Clostridium botulinum (strain ATCC 19397 / Type A).